Reading from the N-terminus, the 720-residue chain is Methionine--tRNA ligase (720 aa).

A 'HIGH' region motif is present at residues 27–37; it reads PYANGQIHIGH. Zn(2+) contacts are provided by Cys-158, Cys-161, Cys-171, and Cys-174. A 'KMSKS' region motif is present at residues 348–352; the sequence is KMSKS. An ATP-binding site is contributed by Lys-351. A tRNA-binding domain is found at 614 to 720; the sequence is DFAKVDLRIA…SGAKPGMRVK (107 aa).

The protein belongs to the class-I aminoacyl-tRNA synthetase family. MetG type 1 subfamily. As to quaternary structure, homodimer. Requires Zn(2+) as cofactor.

The protein localises to the cytoplasm. It catalyses the reaction tRNA(Met) + L-methionine + ATP = L-methionyl-tRNA(Met) + AMP + diphosphate. Its function is as follows. Is required not only for elongation of protein synthesis but also for the initiation of all mRNA translation through initiator tRNA(fMet) aminoacylation. The sequence is that of Methionine--tRNA ligase from Burkholderia ambifaria (strain ATCC BAA-244 / DSM 16087 / CCUG 44356 / LMG 19182 / AMMD) (Burkholderia cepacia (strain AMMD)).